The sequence spans 57 residues: UPF0391 membrane protein BRADO5617 (57 aa).

The next 2 membrane-spanning stretches (helical) occupy residues 1–21 (MLGW…LGFG) and 30–50 (IAKI…VVGL).

Belongs to the UPF0391 family.

It localises to the cell membrane. In Bradyrhizobium sp. (strain ORS 278), this protein is UPF0391 membrane protein BRADO5617.